A 243-amino-acid chain; its full sequence is Venom nerve growth factor 3 (243 aa).

A signal peptide spans 1–18 (MSMLCYTLIIAFLIGIWA). Positions 19-125 (APKSEDNVPL…ALNRNIRAKR (107 aa)) are excised as a propeptide. Over residues 47 to 66 (GLKTSRNTDQRHPAPKKAED) the composition is skewed to basic and acidic residues. The segment at 47–67 (GLKTSRNTDQRHPAPKKAEDQ) is disordered. 3 disulfides stabilise this stretch: Cys139–Cys204, Cys182–Cys232, and Cys192–Cys234. N-linked (GlcNAc...) asparagine glycans are attached at residues Asn148 and Asn151.

Belongs to the NGF-beta family. As to quaternary structure, homodimer; non-covalently linked. As to expression, expressed by the venom gland.

The protein localises to the secreted. Its function is as follows. Nerve growth factor is important for the development and maintenance of the sympathetic and sensory nervous systems. It stimulates division and differentiation of sympathetic and embryonic sensory neurons as well as basal forebrain cholinergic neurons in the brain. Its relevance in the snake venom is not clear. However, it has been shown to inhibit metalloproteinase-dependent proteolysis of platelet glycoprotein Ib alpha, suggesting a metalloproteinase inhibition to prevent metalloprotease autodigestion and/or protection against prey proteases. Binds a lipid between the two protein chains in the homodimer. The lipid-bound form promotes histamine relase from mouse mast cells, contrary to the lipid-free form. The protein is Venom nerve growth factor 3 of Tropidechis carinatus (Australian rough-scaled snake).